The sequence spans 1905 residues: Low-density lipoprotein receptor-related protein 4 (1905 aa).

Residues 1–20 (MRRWWGALLLGALLCAHGTA) form the signal peptide. Residues 21-1723 (SNLECACGRS…VPAAPGEGLH (1703 aa)) lie on the Extracellular side of the membrane. LDL-receptor class A domains follow at residues 26 to 67 (ACGR…DGCT), 70 to 106 (TCSPLDFHCDNGKCIRRSWVCDGDNDCEDDSDEQDCP), 109 to 144 (ECEEDEFPCQNGYCIRSLWHCDGDNDCGDNSDEQCD), 147 to 183 (KCSDKEFRCSDGSCIAEHWYCDGDTDCKDGSDEESCP), 190 to 226 (PCNLEEFQCAYGRCILDIYHCDGDDDCGDWSDESDCS), 230 to 266 (PCRSGEFMCDSGLCVNAGWRCDGDADCDDQSDERNCT), 269 to 305 (MCTAEQFRCRSGRCVRLSWRCDGEDDCADNSDEENCE), and 311 to 350 (QCASDQFLCWNGRCIGQRKLCNGVNDCGDNSDESPQQNCR). Intrachain disulfides connect C27/C44, C34/C57, C51/C66, C71/C83, C78/C96, C90/C105, C110/C122, C117/C135, C129/C143, C148/C160, C155/C173, C167/C182, C191/C203, C198/C216, C210/C225, C231/C243, C238/C256, C250/C265, C270/C282, C277/C295, C289/C304, C312/C324, C319/C337, C331/C349, C358/C369, C365/C378, C380/C393, C399/C409, C405/C418, and C420/C433. N-linked (GlcNAc...) asparagine glycosylation is present at N264. In terms of domain architecture, EGF-like 1; atypical spans 354-394 (GEENCNVNNGGCAQKCQMIRGAVQCTCHTGYRLTEDGRTCQ). The EGF-like 2; calcium-binding domain occupies 395-434 (DVNECAEEGYCSQGCTNSEGAFQCWCEAGYELRPDRRSCK). LDL-receptor class B repeat units lie at residues 480–522 (ELVF…DWVH), 523–565 (DKLY…HPME), 566–609 (GTIY…DYAG), 610–652 (RRMY…FEDS), and 653–693 (LYWT…LHPQ). An N-linked (GlcNAc...) asparagine glycan is attached at N498. Residues 698 to 737 (GKNRCGDNNGGCTHLCLPSGQNYTCACPTGFRKINSHACA) enclose the EGF-like 3 domain. Intrachain disulfides connect C702/C713, C709/C722, and C724/C736. N-linked (GlcNAc...) asparagine glycosylation occurs at N719. LDL-receptor class B repeat units follow at residues 785–827 (DHVY…DWVT), 828–870 (NKLY…EPMG), 871–914 (GYMY…DYGS), 915–956 (QRLY…LYGQ), and 957–998 (RIYW…FHRQ). A glycan (N-linked (GlcNAc...) asparagine) is linked at N901. N-linked (GlcNAc...) asparagine glycosylation occurs at N1077. LDL-receptor class B repeat units follow at residues 1093-1135 (GKVY…DAIG), 1136-1178 (RKVY…YHEM), 1179-1222 (GFMY…DKTS), 1223-1263 (SQLL…LLDS), 1264-1306 (YIYW…DRAQ), 1397-1439 (GKVY…DWVA), 1440-1482 (RNLY…FPRK), 1483-1526 (GYLF…DYDT), 1527-1568 (RRIY…QDRW), and 1569-1610 (IYWT…SPQR). N1415 and N1467 each carry an N-linked (GlcNAc...) asparagine glycan. A disordered region spans residues 1659-1696 (PRATSLNEKSPVLPNTLPTTLHSSTTRTRTSPEGAEGR). Residues 1671–1690 (LPNTLPTTLHSSTTRTRTSP) are compositionally biased toward low complexity. The helical transmembrane segment at 1724-1746 (VSYAVGGLLSVLLILLVTAALML) threads the bilayer. At 1747 to 1905 (YRHRKSKFTD…ERKLSSESQV (159 aa)) the chain is on the cytoplasmic side. Positions 1853-1905 (SSGSLDDTETEQLLQEEQSECSSVHTATTPERRGSLPDTGWKHERKLSSESQV) are disordered. A compositionally biased stretch (polar residues) spans 1872 to 1881 (ECSSVHTATT). Residues 1882 to 1905 (PERRGSLPDTGWKHERKLSSESQV) show a composition bias toward basic and acidic residues.

It belongs to the LDLR family. As to quaternary structure, homooligomer. Interacts with MUSK; the heterodimer forms an AGRIN receptor complex that binds AGRIN resulting in activation of MUSK. Interacts (via the extracellular domain) with SOST; the interaction facilitates the inhibition of Wnt signaling. Interacts with MESD; the interaction promotes glycosylation of LRP4 and its cell-surface expression. Post-translationally, N-glycosylation is required for cell surface location. As to expression, expressed in different regions of the brain, mainly in the olfactory bulb, at lower level in the cerebral cortex and hippocampus.

The protein localises to the cell membrane. Its function is as follows. Mediates SOST-dependent inhibition of bone formation. Functions as a specific facilitator of SOST-mediated inhibition of Wnt signaling. Plays a key role in the formation and the maintenance of the neuromuscular junction (NMJ), the synapse between motor neuron and skeletal muscle. Directly binds AGRIN and recruits it to the MUSK signaling complex. Mediates the AGRIN-induced phosphorylation of MUSK, the kinase of the complex. The activation of MUSK in myotubes induces the formation of NMJ by regulating different processes including the transcription of specific genes and the clustering of AChR in the postsynaptic membrane. Alternatively, may be involved in the negative regulation of the canonical Wnt signaling pathway, being able to antagonize the LRP6-mediated activation of this pathway. More generally, has been proposed to function as a cell surface endocytic receptor binding and internalizing extracellular ligands for degradation by lysosomes. Plays an essential role in the process of digit differentiation. This chain is Low-density lipoprotein receptor-related protein 4 (Lrp4), found in Rattus norvegicus (Rat).